The sequence spans 77 residues: NAD(P)H-quinone oxidoreductase subunit L (77 aa).

2 helical membrane passes run L12–Y32 and L47–L67.

The protein belongs to the complex I NdhL subunit family. In terms of assembly, NDH-1 can be composed of about 15 different subunits; different subcomplexes with different compositions have been identified which probably have different functions.

The protein localises to the cellular thylakoid membrane. The catalysed reaction is a plastoquinone + NADH + (n+1) H(+)(in) = a plastoquinol + NAD(+) + n H(+)(out). It catalyses the reaction a plastoquinone + NADPH + (n+1) H(+)(in) = a plastoquinol + NADP(+) + n H(+)(out). Its function is as follows. NDH-1 shuttles electrons from an unknown electron donor, via FMN and iron-sulfur (Fe-S) centers, to quinones in the respiratory and/or the photosynthetic chain. The immediate electron acceptor for the enzyme in this species is believed to be plastoquinone. Couples the redox reaction to proton translocation, and thus conserves the redox energy in a proton gradient. Cyanobacterial NDH-1 also plays a role in inorganic carbon-concentration. In Prochlorococcus marinus (strain MIT 9301), this protein is NAD(P)H-quinone oxidoreductase subunit L.